The following is a 391-amino-acid chain: Nicotinate phosphoribosyltransferase (391 aa).

Position 216 is a phosphohistidine; by autocatalysis (histidine 216).

Belongs to the NAPRTase family. Transiently phosphorylated on a His residue during the reaction cycle. Phosphorylation strongly increases the affinity for substrates and increases the rate of nicotinate D-ribonucleotide production. Dephosphorylation regenerates the low-affinity form of the enzyme, leading to product release.

The enzyme catalyses nicotinate + 5-phospho-alpha-D-ribose 1-diphosphate + ATP + H2O = nicotinate beta-D-ribonucleotide + ADP + phosphate + diphosphate. It participates in cofactor biosynthesis; NAD(+) biosynthesis; nicotinate D-ribonucleotide from nicotinate: step 1/1. Functionally, catalyzes the synthesis of beta-nicotinate D-ribonucleotide from nicotinate and 5-phospho-D-ribose 1-phosphate at the expense of ATP. The protein is Nicotinate phosphoribosyltransferase of Bordetella petrii (strain ATCC BAA-461 / DSM 12804 / CCUG 43448).